Reading from the N-terminus, the 246-residue chain is 1-(5-phosphoribosyl)-5-[(5-phosphoribosylamino)methylideneamino] imidazole-4-carboxamide isomerase (246 aa).

Catalysis depends on aspartate 8, which acts as the Proton acceptor. Aspartate 129 acts as the Proton donor in catalysis.

The protein belongs to the HisA/HisF family.

The protein localises to the cytoplasm. The enzyme catalyses 1-(5-phospho-beta-D-ribosyl)-5-[(5-phospho-beta-D-ribosylamino)methylideneamino]imidazole-4-carboxamide = 5-[(5-phospho-1-deoxy-D-ribulos-1-ylimino)methylamino]-1-(5-phospho-beta-D-ribosyl)imidazole-4-carboxamide. Its pathway is amino-acid biosynthesis; L-histidine biosynthesis; L-histidine from 5-phospho-alpha-D-ribose 1-diphosphate: step 4/9. The chain is 1-(5-phosphoribosyl)-5-[(5-phosphoribosylamino)methylideneamino] imidazole-4-carboxamide isomerase from Methylocella silvestris (strain DSM 15510 / CIP 108128 / LMG 27833 / NCIMB 13906 / BL2).